The following is a 128-amino-acid chain: V-type proton ATPase subunit F (128 aa).

Belongs to the V-ATPase F subunit family. As to quaternary structure, V-ATPase is a heteromultimeric enzyme composed of a peripheral catalytic V1 complex (components A to H) attached to an integral membrane V0 proton pore complex (components: a, c, c'', d and e).

Its subcellular location is the vacuole membrane. Subunit of the peripheral V1 complex of vacuolar ATPase essential for assembly or catalytic function. V-ATPase is responsible for acidifying a variety of intracellular compartments in eukaryotic cells. In Arabidopsis thaliana (Mouse-ear cress), this protein is V-type proton ATPase subunit F (VHA-F).